Here is a 493-residue protein sequence, read N- to C-terminus: Probable protein phosphatase 2C 40 (493 aa).

One can recognise a PPM-type phosphatase domain in the interval Leu145–Leu480. Mn(2+) is bound by residues Asp180, Gly181, Asp408, and Asp471.

The protein belongs to the PP2C family. Requires Mg(2+) as cofactor. It depends on Mn(2+) as a cofactor.

The enzyme catalyses O-phospho-L-seryl-[protein] + H2O = L-seryl-[protein] + phosphate. The catalysed reaction is O-phospho-L-threonyl-[protein] + H2O = L-threonyl-[protein] + phosphate. The chain is Probable protein phosphatase 2C 40 from Arabidopsis thaliana (Mouse-ear cress).